We begin with the raw amino-acid sequence, 313 residues long: D-alanine--D-alanine ligase (313 aa).

Residues 108-308 (KLVWQQTGVP…YSELVVKVLS (201 aa)) form the ATP-grasp domain. 138-193 (VAKLGLPLFVKPASEGSSVAVLKVKTADALPAALAEAATHDKIVIVEKSIEGGGEY) lines the ATP pocket. Residues Asp-262, Glu-275, and Asn-277 each contribute to the Mg(2+) site.

It belongs to the D-alanine--D-alanine ligase family. Mg(2+) is required as a cofactor. The cofactor is Mn(2+).

The protein resides in the cytoplasm. The enzyme catalyses 2 D-alanine + ATP = D-alanyl-D-alanine + ADP + phosphate + H(+). It participates in cell wall biogenesis; peptidoglycan biosynthesis. In terms of biological role, cell wall formation. This is D-alanine--D-alanine ligase from Burkholderia cenocepacia (strain HI2424).